The following is a 198-amino-acid chain: Putative 3-methyladenine DNA glycosylase (198 aa).

It belongs to the DNA glycosylase MPG family.

The polypeptide is Putative 3-methyladenine DNA glycosylase (Oceanobacillus iheyensis (strain DSM 14371 / CIP 107618 / JCM 11309 / KCTC 3954 / HTE831)).